The chain runs to 289 residues: tRNA dimethylallyltransferase (289 aa).

9–16 lines the ATP pocket; that stretch reads GTTASGKT. 11–16 is a substrate binding site; sequence TASGKT. The interval 34 to 37 is interaction with substrate tRNA; the sequence is DSLC.

This sequence belongs to the IPP transferase family. As to quaternary structure, monomer. Requires Mg(2+) as cofactor.

The enzyme catalyses adenosine(37) in tRNA + dimethylallyl diphosphate = N(6)-dimethylallyladenosine(37) in tRNA + diphosphate. Catalyzes the transfer of a dimethylallyl group onto the adenine at position 37 in tRNAs that read codons beginning with uridine, leading to the formation of N6-(dimethylallyl)adenosine (i(6)A). In Campylobacter jejuni subsp. jejuni serotype O:23/36 (strain 81-176), this protein is tRNA dimethylallyltransferase.